A 428-amino-acid polypeptide reads, in one-letter code: Histidine--tRNA ligase (428 aa).

Belongs to the class-II aminoacyl-tRNA synthetase family. Homodimer.

Its subcellular location is the cytoplasm. It carries out the reaction tRNA(His) + L-histidine + ATP = L-histidyl-tRNA(His) + AMP + diphosphate + H(+). In Sorangium cellulosum (strain So ce56) (Polyangium cellulosum (strain So ce56)), this protein is Histidine--tRNA ligase.